The following is a 381-amino-acid chain: tRNA pseudouridine synthase D (381 aa).

The active-site Nucleophile is the D81. Residues 160 to 335 (GMPNYFGSQR…TLGSRRFFWV (176 aa)) enclose the TRUD domain.

This sequence belongs to the pseudouridine synthase TruD family.

It catalyses the reaction uridine(13) in tRNA = pseudouridine(13) in tRNA. Responsible for synthesis of pseudouridine from uracil-13 in transfer RNAs. This Helicobacter pylori (strain J99 / ATCC 700824) (Campylobacter pylori J99) protein is tRNA pseudouridine synthase D.